The sequence spans 73 residues: Putative antitoxin VapB38 (73 aa).

In terms of biological role, probable antitoxin component of a type II toxin-antitoxin (TA) system. Its putative cognate toxin is VapC38. In Mycobacterium tuberculosis (strain ATCC 25618 / H37Rv), this protein is Putative antitoxin VapB38 (vapB38).